Here is a 502-residue protein sequence, read N- to C-terminus: Cytochrome P450 monooxygenase verC (502 aa).

Residues 9–29 traverse the membrane as a helical segment; it reads IAALPMVSLLGAALIVVSVLG. N-linked (GlcNAc...) asparagine glycosylation is found at N124, N190, N271, and N342. Heme is bound at residue C444.

This sequence belongs to the cytochrome P450 family. Requires heme as cofactor.

Its subcellular location is the membrane. Its pathway is mycotoxin biosynthesis. Functionally, cytochrome P450 monooxygenase; part of the gene cluster that mediates the biosynthesis of 11'-deoxyverticillin A, one of the dimeric epipolythiodioxopiperazines (ETPs) from the verticillin family that act as mycotoxins. 11'-deoxyverticillin A is required for normal conidiation. The nonribosomal peptide synthetase verP is speculated to be responsible for condensation of amino acids to form the carbon skeleton of verticillin, whereas the cluster-specific tailoring enzymes are involved in further modifications leading to the production of 11'-deoxyverticillin A. The sequence is that of Cytochrome P450 monooxygenase verC from Clonostachys rogersoniana.